The primary structure comprises 602 residues: Elongation factor 4 (602 aa).

The region spanning 8 to 190 (DLIRNFSIVA…AIVHRLPPPK (183 aa)) is the tr-type G domain. GTP is bound by residues 20-25 (DHGKST) and 137-140 (NKID).

It belongs to the TRAFAC class translation factor GTPase superfamily. Classic translation factor GTPase family. LepA subfamily.

It localises to the cell inner membrane. It catalyses the reaction GTP + H2O = GDP + phosphate + H(+). In terms of biological role, required for accurate and efficient protein synthesis under certain stress conditions. May act as a fidelity factor of the translation reaction, by catalyzing a one-codon backward translocation of tRNAs on improperly translocated ribosomes. Back-translocation proceeds from a post-translocation (POST) complex to a pre-translocation (PRE) complex, thus giving elongation factor G a second chance to translocate the tRNAs correctly. Binds to ribosomes in a GTP-dependent manner. This chain is Elongation factor 4, found in Cereibacter sphaeroides (strain KD131 / KCTC 12085) (Rhodobacter sphaeroides).